A 361-amino-acid chain; its full sequence is Anthranilate phosphoribosyltransferase (361 aa).

5-phospho-alpha-D-ribose 1-diphosphate contacts are provided by residues Gly-80, 83–84, Thr-88, 90–93, 108–116, and Ser-120; these read GD, NVST, and KHGNYSVSS. An anthranilate-binding site is contributed by Gly-80. Mg(2+) is bound at residue Ser-92. Asn-111 lines the anthranilate pocket. Arg-166 lines the anthranilate pocket. Asp-224 and Glu-225 together coordinate Mg(2+). The interval 338 to 361 is disordered; sequence EGDGEAASTDSAAASTTAGPEDDD. The segment covering 343 to 355 has biased composition (low complexity); it reads AASTDSAAASTTA.

Belongs to the anthranilate phosphoribosyltransferase family. Homodimer. It depends on Mg(2+) as a cofactor.

It catalyses the reaction N-(5-phospho-beta-D-ribosyl)anthranilate + diphosphate = 5-phospho-alpha-D-ribose 1-diphosphate + anthranilate. It functions in the pathway amino-acid biosynthesis; L-tryptophan biosynthesis; L-tryptophan from chorismate: step 2/5. Functionally, catalyzes the transfer of the phosphoribosyl group of 5-phosphorylribose-1-pyrophosphate (PRPP) to anthranilate to yield N-(5'-phosphoribosyl)-anthranilate (PRA). In Halorubrum lacusprofundi (strain ATCC 49239 / DSM 5036 / JCM 8891 / ACAM 34), this protein is Anthranilate phosphoribosyltransferase.